A 436-amino-acid polypeptide reads, in one-letter code: MKYLDVRLPEFANEFQQVLSRGKMDMKEVSSLVQELLDEIRTEGLDALKKHIARFDKWEVKSFEDLRISPKECLNAYNQLSSELKSALHLAYDRIYAFHRKQKMQSWIDCEENGNILGSKFTPMERAGLYIPGGKAAYPSSLLMNAIPAIVAGVKEIVVCSPTPHNQANPLVLAALHLCGITEVYKVGGASAIGLMAYGCKEIPKVDVITGPGNIFVACAKKLVFGEVNIDMVAGPSEIAIIADSQANPLYIAYDLLSQAEHDEMASSILISDSAPLIESVQKHIEQILPSMPRAEIAGASIKNRAVMIYTRNLQESIEIANAIAPEHLEVLTTTPFDTLPYIKHAGAIFLGEHSSEPIGDYLAGPNHTLPTGGSARFFSPLGVEHFMKKSSIIAFSATALEEVGESCALLAQSESLSAHAQAVLTRLDSIKSKRE.

Substrate is bound by residues S237, Q259, and H262. Zn(2+) contacts are provided by Q259 and H262. Active-site proton acceptor residues include E327 and H328. Substrate contacts are provided by H328, D361, E415, and H420. D361 provides a ligand contact to Zn(2+). Position 420 (H420) interacts with Zn(2+).

The protein belongs to the histidinol dehydrogenase family. Requires Zn(2+) as cofactor.

It carries out the reaction L-histidinol + 2 NAD(+) + H2O = L-histidine + 2 NADH + 3 H(+). It functions in the pathway amino-acid biosynthesis; L-histidine biosynthesis; L-histidine from 5-phospho-alpha-D-ribose 1-diphosphate: step 9/9. Its function is as follows. Catalyzes the sequential NAD-dependent oxidations of L-histidinol to L-histidinaldehyde and then to L-histidine. In Helicobacter hepaticus (strain ATCC 51449 / 3B1), this protein is Histidinol dehydrogenase.